The following is a 335-amino-acid chain: Fructose-1,6-bisphosphatase class 1 (335 aa).

Residues Glu-92, Asp-114, Leu-116, and Asp-117 each coordinate Mg(2+). Substrate is bound by residues 117-120, Asn-209, and Lys-275; that span reads DGSS. Glu-281 contacts Mg(2+).

It belongs to the FBPase class 1 family. In terms of assembly, homotetramer. It depends on Mg(2+) as a cofactor.

It is found in the cytoplasm. The catalysed reaction is beta-D-fructose 1,6-bisphosphate + H2O = beta-D-fructose 6-phosphate + phosphate. Its pathway is carbohydrate biosynthesis; gluconeogenesis. The chain is Fructose-1,6-bisphosphatase class 1 from Verminephrobacter eiseniae (strain EF01-2).